The sequence spans 102 residues: Small ribosomal subunit protein uS10 (102 aa).

The protein belongs to the universal ribosomal protein uS10 family. As to quaternary structure, part of the 30S ribosomal subunit.

Its function is as follows. Involved in the binding of tRNA to the ribosomes. In Rhodospirillum centenum (strain ATCC 51521 / SW), this protein is Small ribosomal subunit protein uS10.